Here is a 153-residue protein sequence, read N- to C-terminus: Histone H2B.8 (153 aa).

Basic and acidic residues-rich tracts occupy residues 1–28 and 36–53; these read MAPK…EKAP and EKRL…EGKK. The segment at 1–61 is disordered; sequence MAPKAEKKPA…KKAGRKKAKK (61 aa). An N6-acetyllysine mark is found at Lys7 and Lys37. Lys149 participates in a covalent cross-link: Glycyl lysine isopeptide (Lys-Gly) (interchain with G-Cter in ubiquitin).

This sequence belongs to the histone H2B family. The nucleosome is a histone octamer containing two molecules each of H2A, H2B, H3 and H4 assembled in one H3-H4 heterotetramer and two H2A-H2B heterodimers. The octamer wraps approximately 147 bp of DNA. In terms of processing, can be acetylated to form H2BK6ac and H2BK33ac. Post-translationally, monoubiquitinated by BRE1 to form H2BK143ub1 and deubiquitinated by UBP26. Required for heterochromatic histone H3 di- and trimethylation at H3K4me. May give a specific tag for epigenetic transcriptional activation.

The protein localises to the nucleus. The protein resides in the chromosome. Its function is as follows. Core component of nucleosome. Nucleosomes wrap and compact DNA into chromatin, limiting DNA accessibility to the cellular machineries which require DNA as a template. Histones thereby play a central role in transcription regulation, DNA repair, DNA replication and chromosomal stability. DNA accessibility is regulated via a complex set of post-translational modifications of histones, also called histone code, and nucleosome remodeling. The chain is Histone H2B.8 (H2B.8) from Oryza sativa subsp. indica (Rice).